The following is a 241-amino-acid chain: 1-(5-phosphoribosyl)-5-[(5-phosphoribosylamino)methylideneamino] imidazole-4-carboxamide isomerase (241 aa).

Catalysis depends on D7, which acts as the Proton acceptor. Catalysis depends on D129, which acts as the Proton donor.

It belongs to the HisA/HisF family.

It localises to the cytoplasm. It carries out the reaction 1-(5-phospho-beta-D-ribosyl)-5-[(5-phospho-beta-D-ribosylamino)methylideneamino]imidazole-4-carboxamide = 5-[(5-phospho-1-deoxy-D-ribulos-1-ylimino)methylamino]-1-(5-phospho-beta-D-ribosyl)imidazole-4-carboxamide. The protein operates within amino-acid biosynthesis; L-histidine biosynthesis; L-histidine from 5-phospho-alpha-D-ribose 1-diphosphate: step 4/9. The chain is 1-(5-phosphoribosyl)-5-[(5-phosphoribosylamino)methylideneamino] imidazole-4-carboxamide isomerase from Buchnera aphidicola subsp. Baizongia pistaciae (strain Bp).